We begin with the raw amino-acid sequence, 300 residues long: MTAPLGFAVIDKPAGLTSHACVARIRRLLGIRRVGHGGTLDPAVTGVLPIAVGQATRLLPYLPGDKTYRGVIQLGITTNTDDLEGEISSRQPLPALSSAELEQALAPFRGLIQQRPPQVSAVHVDGERAHARARRGEQMDLPERAITIHHLHLLNWCPEQGQLRVEVHCSAGTYIRSLARDLGQNLGCGGCLASLRRTQALGFQDAQAIPLPERPEPGATATDPPALPLLPPQDALAHLPQRRLSAREQEDWSCGRRITPGADQESDAVVVLSEGGRMLGLGVPDGTGGLQPKVVFEARG.

Catalysis depends on D41, which acts as the Nucleophile.

The protein belongs to the pseudouridine synthase TruB family. Type 1 subfamily.

It carries out the reaction uridine(55) in tRNA = pseudouridine(55) in tRNA. Functionally, responsible for synthesis of pseudouridine from uracil-55 in the psi GC loop of transfer RNAs. The protein is tRNA pseudouridine synthase B of Synechococcus sp. (strain WH7803).